Consider the following 430-residue polypeptide: Ribosomal protein uS12 methylthiotransferase RimO (430 aa).

The MTTase N-terminal domain occupies 2–119 (ISVYSISLGC…WPEMIGRALG (118 aa)). Positions 11, 46, 81, 145, 149, and 152 each coordinate [4Fe-4S] cluster. Residues 131-361 (STGPSYAYLK…MEVQAEISEE (231 aa)) form the Radical SAM core domain. Residues 364-430 (EGFTGSDEDV…SRTYDLVALS (67 aa)) form the TRAM domain.

This sequence belongs to the methylthiotransferase family. RimO subfamily. [4Fe-4S] cluster is required as a cofactor.

Its subcellular location is the cytoplasm. The enzyme catalyses L-aspartate(89)-[ribosomal protein uS12]-hydrogen + (sulfur carrier)-SH + AH2 + 2 S-adenosyl-L-methionine = 3-methylsulfanyl-L-aspartate(89)-[ribosomal protein uS12]-hydrogen + (sulfur carrier)-H + 5'-deoxyadenosine + L-methionine + A + S-adenosyl-L-homocysteine + 2 H(+). Its function is as follows. Catalyzes the methylthiolation of an aspartic acid residue of ribosomal protein uS12. The protein is Ribosomal protein uS12 methylthiotransferase RimO of Oleidesulfovibrio alaskensis (strain ATCC BAA-1058 / DSM 17464 / G20) (Desulfovibrio alaskensis).